The primary structure comprises 306 residues: Tyrosine--tRNA ligase (306 aa).

L-tyrosine-binding residues include Tyr-32 and Glu-36. Residues 37–45 (PSGKIHLGH) carry the 'HIGH' region motif. Residues 151–158 (YPIMQVND) are tyrosine. Gln-173 is an L-tyrosine binding site. The short motif at 204–208 (KMSSS) is the 'KMSKS' region element. Ser-207 lines the ATP pocket. Interaction with t-RNA stretches follow at residues 228 to 231 (KAYC) and 283 to 288 (HPMDLK).

This sequence belongs to the class-I aminoacyl-tRNA synthetase family. TyrS type 3 subfamily. In terms of assembly, homodimer.

It localises to the cytoplasm. It catalyses the reaction tRNA(Tyr) + L-tyrosine + ATP = L-tyrosyl-tRNA(Tyr) + AMP + diphosphate + H(+). Catalyzes the attachment of tyrosine to tRNA(Tyr) in a two-step reaction: tyrosine is first activated by ATP to form Tyr-AMP and then transferred to the acceptor end of tRNA(Tyr). This chain is Tyrosine--tRNA ligase (tyrS), found in Methanocaldococcus jannaschii (strain ATCC 43067 / DSM 2661 / JAL-1 / JCM 10045 / NBRC 100440) (Methanococcus jannaschii).